We begin with the raw amino-acid sequence, 129 residues long: Cytochrome c3 (129 aa).

Residues 1 to 22 (MRKLFFCGVLALAVAFALPVVA) form the signal peptide. Residues His-44, His-47, Cys-52, Cys-55, His-56, His-57, Cys-68, Cys-73, His-74, His-92, Cys-101, Cys-104, His-105, Cys-122, Cys-127, and His-128 each contribute to the heme c site.

Post-translationally, binds 4 heme c groups per subunit.

It is found in the periplasm. Participates in sulfate respiration coupled with phosphorylation by transferring electrons from the enzyme dehydrogenase to ferredoxin. In Nitratidesulfovibrio vulgaris (strain ATCC 29579 / DSM 644 / CCUG 34227 / NCIMB 8303 / VKM B-1760 / Hildenborough) (Desulfovibrio vulgaris), this protein is Cytochrome c3.